Reading from the N-terminus, the 788-residue chain is Histidine--tRNA ligase, cytoplasmic (788 aa).

The segment at 252–286 (PQACEENEAGSSTENPHASGEKPKGDKKSKKKKTL) is disordered.

It belongs to the class-II aminoacyl-tRNA synthetase family. Homodimer.

The catalysed reaction is tRNA(His) + L-histidine + ATP = L-histidyl-tRNA(His) + AMP + diphosphate + H(+). The chain is Histidine--tRNA ligase, cytoplasmic from Oryza sativa subsp. japonica (Rice).